Reading from the N-terminus, the 103-residue chain is Ghrelin (103 aa).

The first 26 residues, 1–26, serve as a signal peptide directing secretion; that stretch reads MPLRRRASHMFVLLCALSLCVESVKG. A disordered region spans residues 27–51; it reads GTSFLSPAQKPQGRRPPRMGRRDVA. A lipid anchor (O-decanoyl serine; alternate) is attached at serine 29. Serine 29 carries O-hexanoyl serine; alternate lipidation. The O-octanoyl serine; alternate moiety is linked to residue serine 29. At glutamine 38 the chain carries Glutamine amide. Methionine 45 carries the post-translational modification Methionine amide. Residues 49 to 103 constitute a propeptide, removed in mature form; the sequence is DVAEPEIPVIKEDDQFMMSAPFELSVSLSEAEYEKYGPVLQKVLVNLLGDSPLEF.

It belongs to the motilin family. O-octanoylated by GOAT/MBOAT4. O-octanoylation or O-decanoylation is essential for activity. The O-decanoylated form differs in the length of the carbon backbone of the carboxylic acid forming an ester bond with Ser-29. Expressed in the telencephalon, hypothalamus, pituitary, intestine, liver, spleen and gill, with expression strongest in the intestine.

The protein resides in the secreted. Functionally, ligand for growth hormone secretagogue receptor type 1 (GHSR). Induces the release of growth hormone from the pituitary. Induces adiposity and stimulates gastric acid secretion. Involved in growth regulation. Has an appetite-stimulating effect. This Carassius auratus (Goldfish) protein is Ghrelin (ghrl).